Here is a 369-residue protein sequence, read N- to C-terminus: Aspartate beta-hydroxylase domain-containing protein 2 (369 aa).

Residues 1 to 58 (MVWAPLGPPRTDCLTLLHTPSKDSPKMSLEWLVAWSWSLDGLRDCIATGIQSVRDCDT) lie on the Cytoplasmic side of the membrane. A helical membrane pass occupies residues 59-79 (TAVITVACLLVLFVWYCYHVG). At 80 to 369 (REQPRPYVSV…ALDFIFAPGR (290 aa)) the chain is on the lumenal side. N-linked (GlcNAc...) asparagine glycosylation is present at Asn211. Positions 228 and 272 each coordinate 2-oxoglutarate. Residue His283 participates in Fe cation binding. 292 to 294 (RCH) provides a ligand contact to 2-oxoglutarate. A Fe cation-binding site is contributed by His328. A 2-oxoglutarate-binding site is contributed by Arg341.

This sequence belongs to the aspartyl/asparaginyl beta-hydroxylase family. Fe cation is required as a cofactor.

The protein localises to the membrane. Its function is as follows. May function as 2-oxoglutarate-dependent dioxygenase. The protein is Aspartate beta-hydroxylase domain-containing protein 2 (ASPHD2) of Homo sapiens (Human).